The sequence spans 696 residues: L-amino-acid oxidase (696 aa).

The propeptide occupies M1–R130. Residues E207, R215, M236 to R237, and V440 each bind FAD. R237 lines the substrate pocket. Residue Y564 participates in substrate binding. Residues E649 and I658 to A661 contribute to the FAD site.

Belongs to the flavin monoamine oxidase family. FAD is required as a cofactor.

It catalyses the reaction an L-alpha-amino acid + O2 + H2O = a 2-oxocarboxylate + H2O2 + NH4(+). In Neurospora crassa (strain ATCC 24698 / 74-OR23-1A / CBS 708.71 / DSM 1257 / FGSC 987), this protein is L-amino-acid oxidase (lox).